The following is a 996-amino-acid chain: Sodium/potassium-transporting ATPase subunit alpha-A (996 aa).

A run of 2 helical transmembrane segments spans residues 73 to 93 and 107 to 123; these read LFGGFQMLLWIGSILCFIAYT and LYLGLALLFVVIMTGCF. Residues 191–211 are disordered; the sequence is DNSSLTGESEPQSRSTECTND. A run of 2 helical transmembrane segments spans residues 268 to 290 and 297 to 325; these read FIHIITAMAVSLAAVFAVISFLY and AAIFMIGIIVAKVPEGLLATVTVCLTLTA. D353 serves as the catalytic 4-aspartylphosphate intermediate. K483 contacts ATP. Positions 692 and 696 each coordinate Mg(2+). Helical transmembrane passes span 762–785, 820–847, 889–909, and 926–951; these read LSPFLMYILFDLPLAIGTVTILCI, ERLISMAYGQIGVMQAFGGFFTYFVIMG, YTCHTAFFISIVIVQWTDLII, and TLNFALVFETCVAAFLSYTPGMDKGL.

It belongs to the cation transport ATPase (P-type) (TC 3.A.3) family. Type IIC subfamily. As to quaternary structure, the sodium/potassium-transporting ATPase is composed of a catalytic alpha subunit, an auxiliary non-catalytic beta subunit and an additional regulatory subunit.

The protein resides in the cell membrane. The catalysed reaction is K(+)(out) + Na(+)(in) + ATP + H2O = K(+)(in) + Na(+)(out) + ADP + phosphate + H(+). Functionally, this is the catalytic component of the active enzyme, which catalyzes the hydrolysis of ATP coupled with the exchange of sodium and potassium ions across the plasma membrane. This action creates the electrochemical gradient of sodium and potassium ions, providing the energy for active transport of various nutrients. The sequence is that of Sodium/potassium-transporting ATPase subunit alpha-A from Artemia franciscana (Brine shrimp).